We begin with the raw amino-acid sequence, 404 residues long: Probable tRNA sulfurtransferase (404 aa).

The 106-residue stretch at 60–165 (QPIVEALKLV…DEAAYISYEE (106 aa)) folds into the THUMP domain. ATP is bound by residues 183–184 (ML), 208–209 (HF), Arg-265, Gly-287, and Gln-296.

This sequence belongs to the ThiI family.

The protein localises to the cytoplasm. It catalyses the reaction [ThiI sulfur-carrier protein]-S-sulfanyl-L-cysteine + a uridine in tRNA + 2 reduced [2Fe-2S]-[ferredoxin] + ATP + H(+) = [ThiI sulfur-carrier protein]-L-cysteine + a 4-thiouridine in tRNA + 2 oxidized [2Fe-2S]-[ferredoxin] + AMP + diphosphate. It carries out the reaction [ThiS sulfur-carrier protein]-C-terminal Gly-Gly-AMP + S-sulfanyl-L-cysteinyl-[cysteine desulfurase] + AH2 = [ThiS sulfur-carrier protein]-C-terminal-Gly-aminoethanethioate + L-cysteinyl-[cysteine desulfurase] + A + AMP + 2 H(+). Its pathway is cofactor biosynthesis; thiamine diphosphate biosynthesis. In terms of biological role, catalyzes the ATP-dependent transfer of a sulfur to tRNA to produce 4-thiouridine in position 8 of tRNAs, which functions as a near-UV photosensor. Also catalyzes the transfer of sulfur to the sulfur carrier protein ThiS, forming ThiS-thiocarboxylate. This is a step in the synthesis of thiazole, in the thiamine biosynthesis pathway. The sulfur is donated as persulfide by IscS. The protein is Probable tRNA sulfurtransferase of Streptococcus pyogenes serotype M49 (strain NZ131).